The chain runs to 353 residues: UPF0283 membrane protein YpsIP31758_1791 (353 aa).

Helical transmembrane passes span 71–91 (MVTA…VQWV), 101–121 (IALG…GSVV), and 214–234 (ESAL…FIAW).

This sequence belongs to the UPF0283 family.

It is found in the cell inner membrane. The polypeptide is UPF0283 membrane protein YpsIP31758_1791 (Yersinia pseudotuberculosis serotype O:1b (strain IP 31758)).